Reading from the N-terminus, the 309-residue chain is Porphobilinogen deaminase (309 aa).

At C242 the chain carries S-(dipyrrolylmethanemethyl)cysteine.

It belongs to the HMBS family. As to quaternary structure, monomer. Dipyrromethane is required as a cofactor.

It carries out the reaction 4 porphobilinogen + H2O = hydroxymethylbilane + 4 NH4(+). It functions in the pathway porphyrin-containing compound metabolism; protoporphyrin-IX biosynthesis; coproporphyrinogen-III from 5-aminolevulinate: step 2/4. Tetrapolymerization of the monopyrrole PBG into the hydroxymethylbilane pre-uroporphyrinogen in several discrete steps. In Shewanella sediminis (strain HAW-EB3), this protein is Porphobilinogen deaminase.